The sequence spans 176 residues: Cytochrome b (176 aa).

The next 3 helical transmembrane spans lie at 33-53, 77-98, and 113-133; these read FGSL…FLAM, WLIR…FLHV, and WNIG…GYVL. Positions 83 and 97 each coordinate heme b.

It belongs to the cytochrome b family. In terms of assembly, the cytochrome bc1 complex contains 11 subunits: 3 respiratory subunits (MT-CYB, CYC1 and UQCRFS1), 2 core proteins (UQCRC1 and UQCRC2) and 6 low-molecular weight proteins (UQCRH/QCR6, UQCRB/QCR7, UQCRQ/QCR8, UQCR10/QCR9, UQCR11/QCR10 and a cleavage product of UQCRFS1). This cytochrome bc1 complex then forms a dimer. It depends on heme b as a cofactor.

The protein localises to the mitochondrion inner membrane. Component of the ubiquinol-cytochrome c reductase complex (complex III or cytochrome b-c1 complex) that is part of the mitochondrial respiratory chain. The b-c1 complex mediates electron transfer from ubiquinol to cytochrome c. Contributes to the generation of a proton gradient across the mitochondrial membrane that is then used for ATP synthesis. The chain is Cytochrome b (MT-CYB) from Sciurus carolinensis (Eastern gray squirrel).